The following is a 672-amino-acid chain: MMSNVANASQRQENPYIIPLPPSSTVETSTEPPRTLWMGDLDPSFDEATIEEIWSKLDKKVIVKLIRAKKNLLIPCSSTSSSNNNTSEENAENQQSASNSTDQLDNSQMININGISFIDPSTTQLHHAGYCFVEFETQKDAKFALSLNATPLPNFYSPTTNSQTNPTFKRTFRLNWASGATLQSSIPSTPEFSLFVGDLSPTATEADLLSLFQTRFKSVKTVRVMTDPLTGSSRCFGFVRFGDEDERRRALIEMSGKWFQGRALRVAYATPRNNMMLQLQEQQQQQQQLQQQHQQLDQEDNNGPLLIKTANNLIQNNSNMLPLNALHNAPPMHLNEGGISNMRVNDSLPSNTYNTDPTNTTVFVGGLVPKTTEFQLRSLFKPFGPILNVRIPNGKNCGFVKFEKRIDAEASIQGLQGFIVGGSPIRLSWGRPSSSNAKTNSTIMGASQYMSSNGLRAPSAASSVDNSKQILEQYAEDKRRLFLHQQQQQQQQQQQDGNFSMEQMAHNNYYNYNNYDYHRNKNGSHSDLVNLQRSNVPYMQEDGALYPHQYSSPSYSLHPTGNQFSNATNNLPQFGNAMSISMQLPNGNSNKTASSMNTNPNTNMIMNSNMNMNMNVNPVPYGMGNGANMYDVSRMMTPPLNIAPNSNNSKSSIMNKHPNRNNVPPIHPSLLH.

Methionine 1 is modified (N-acetylmethionine). Polar residues-rich tracts occupy residues methionine 1–glutamate 13 and serine 23–proline 32. 2 disordered regions span residues methionine 1–aspartate 40 and serine 77–aspartate 102. At methionine 2 the chain carries N-acetylserine. RRM domains lie at leucine 36–threonine 159, phenylalanine 192–proline 271, and threonine 360–proline 432. The span at serine 77–serine 96 shows a compositional bias: low complexity. Position 524 is a phosphoserine (serine 524). A disordered region spans residues leucine 640–histidine 672. Positions asparagine 645 to lysine 656 are enriched in low complexity.

In terms of biological role, may be an RNA-binding protein involved in control of an RNA processing pathway that influences the regulation of cell growth in early log phase. Can bind to RNA and single-stranded DNA but not double-stranded DNA. The sequence is that of Negative growth regulatory protein NGR1 (NGR1) from Saccharomyces cerevisiae (strain ATCC 204508 / S288c) (Baker's yeast).